The primary structure comprises 495 residues: Probable cytosol aminopeptidase (495 aa).

Residues Lys-267 and Asp-272 each contribute to the Mn(2+) site. Residue Lys-279 is part of the active site. Mn(2+) contacts are provided by Asp-290, Asp-349, and Glu-351. Residue Arg-353 is part of the active site.

It belongs to the peptidase M17 family. It depends on Mn(2+) as a cofactor.

It localises to the cytoplasm. It catalyses the reaction Release of an N-terminal amino acid, Xaa-|-Yaa-, in which Xaa is preferably Leu, but may be other amino acids including Pro although not Arg or Lys, and Yaa may be Pro. Amino acid amides and methyl esters are also readily hydrolyzed, but rates on arylamides are exceedingly low.. The catalysed reaction is Release of an N-terminal amino acid, preferentially leucine, but not glutamic or aspartic acids.. Functionally, presumably involved in the processing and regular turnover of intracellular proteins. Catalyzes the removal of unsubstituted N-terminal amino acids from various peptides. This Histophilus somni (strain 129Pt) (Haemophilus somnus) protein is Probable cytosol aminopeptidase.